A 613-amino-acid polypeptide reads, in one-letter code: MSSLTSVELNFLVFRYLQESGFTHAAFTLGYEAGINKSNIDGNMVPPGALIKFVQKGLQYMEMEANLSNSEVDIDEDFSFFQPLDLISKDVKELQDMLREKKRKERDMEKERDRSKENDKGVEREHEGDRNRAKEKDRHEKQKEREREREKLEREKEREREKIEREKEREREKMEREIFEREKDRLKLEKEREIEREREREKIEREKSHEKQLGDADREMVIDQTDKEIAGDGSTGAEPMDIVMTPTSQTSHIPNSDVRILEGHTSEVCACAWSPSASLLASGSGDATARIWSIPEGSFKAVHTGRNINALILKHAKGKSNEKSKDVTTLDWNGEGTLLATGSCDGQARIWTLNGELISTLSKHKGPIFSLKWNKKGDYLLTGSVDRTAVVWDVKAEEWKQQFEFHSGPTLDVDWRNNVSFATSSTDSMIYLCKIGETRPAKTFTGHQGEVNCVKWDPTGSLLASCSDDSTAKIWNIKQSTFVHDLREHTKEIYTIRWSPTGPGTNNPNKQLTLASASFDSTVKLWDAELGKMLCSFNGHREPVYSLAFSPNGEYIASGSLDKSIHIWSIKEGKIVKTYTGNGGIFEVCWNKEGNKIAACFADNSVCVLDFRM.

The LisH domain occupies 5-37 (TSVELNFLVFRYLQESGFTHAAFTLGYEAGINK). Disordered regions lie at residues 101-174 (KKRK…REKM) and 193-214 (EIER…KQLG). WD repeat units lie at residues 263–302 (GHTS…FKAV), 322–362 (EKSK…STLS), 363–402 (KHKG…WKQQ), 405–443 (FHSG…PAKT), 446–485 (GHQG…FVHD), 488–536 (EHTK…MLCS), 539–580 (GHRE…KTYT), and 582–613 (NGGI…DFRM).

The protein resides in the nucleus. In terms of biological role, acts as a repressor of cold stress-regulated gene expression. Interacts specifically with and promotes deacetylation of histone H4. Plays a role in gene regulation for plant acclimation and tolerance to cold stress. The chain is WD40 repeat-containing protein HOS15 from Arabidopsis thaliana (Mouse-ear cress).